Consider the following 270-residue polypeptide: Phosphatidylinositol transfer protein alpha isoform (270 aa).

T58, K60, E85, N89, T96, and K194 together coordinate a 1,2-diacyl-sn-glycero-3-phospho-(1D-myo-inositol). K215 is modified (N6-acetyllysine). The span at 250–263 (TKRQLDEMRQKDPV) shows a compositional bias: basic and acidic residues. Residues 250–270 (TKRQLDEMRQKDPVKGMTADD) are disordered.

The protein belongs to the PtdIns transfer protein family. PI transfer class I subfamily. Phosphorylated by PKC in a calcium and phosphatidylserine-dependent manner.

The protein resides in the cytoplasm. Its subcellular location is the nucleus. It catalyses the reaction a 1,2-diacyl-sn-glycero-3-phosphocholine(in) = a 1,2-diacyl-sn-glycero-3-phosphocholine(out). It carries out the reaction a 1,2-diacyl-sn-glycero-3-phospho-(1D-myo-inositol)(in) = a 1,2-diacyl-sn-glycero-3-phospho-(1D-myo-inositol)(out). Functionally, catalyzes the transfer of phosphatidylinositol (PI) and phosphatidylcholine (PC) between membranes. Shows a preference for PI and PC containing shorter saturated or monosaturated acyl chains at the sn-1 and sn-2 positions. Preference order for PC is C16:1 &gt; C16:0 &gt; C18:1 &gt; C18:0 &gt; C20:4 and for PI is C16:1 &gt; C16:0 &gt; C18:1 &gt; C18:0 &gt; C20:4 &gt; C20:3. The sequence is that of Phosphatidylinositol transfer protein alpha isoform (PITPNA) from Oryctolagus cuniculus (Rabbit).